We begin with the raw amino-acid sequence, 239 residues long: Ribosome assembly factor mrt4 (239 aa).

This sequence belongs to the universal ribosomal protein uL10 family. In terms of assembly, associates with the pre-60S ribosomal particle.

It is found in the nucleus. It localises to the nucleolus. The protein resides in the cytoplasm. In terms of biological role, component of the ribosome assembly machinery. Nuclear paralog of the ribosomal protein P0, it binds pre-60S subunits at an early stage of assembly in the nucleolus, and is replaced by P0 in cytoplasmic pre-60S subunits and mature 80S ribosomes. This Candida glabrata (strain ATCC 2001 / BCRC 20586 / JCM 3761 / NBRC 0622 / NRRL Y-65 / CBS 138) (Yeast) protein is Ribosome assembly factor mrt4.